The chain runs to 101 residues: NADH-quinone oxidoreductase subunit K (101 aa).

Helical transmembrane passes span 4-24 (LTHY…GIFL), 30-50 (IVLL…FIAF), and 61-81 (IFVF…LAIL).

It belongs to the complex I subunit 4L family. In terms of assembly, NDH-1 is composed of 14 different subunits. Subunits NuoA, H, J, K, L, M, N constitute the membrane sector of the complex.

It localises to the cell inner membrane. The catalysed reaction is a quinone + NADH + 5 H(+)(in) = a quinol + NAD(+) + 4 H(+)(out). In terms of biological role, NDH-1 shuttles electrons from NADH, via FMN and iron-sulfur (Fe-S) centers, to quinones in the respiratory chain. The immediate electron acceptor for the enzyme in this species is believed to be ubiquinone. Couples the redox reaction to proton translocation (for every two electrons transferred, four hydrogen ions are translocated across the cytoplasmic membrane), and thus conserves the redox energy in a proton gradient. This is NADH-quinone oxidoreductase subunit K from Laribacter hongkongensis (strain HLHK9).